We begin with the raw amino-acid sequence, 295 residues long: MGIQSSTMKLPLIHEILDYWHLLKPKIMYLVVLTGVTGIIIAPGNIHPLIAVISTLCIALGSGAAGAINMWYDSDIDALMTRTKTRPIPAGKISRSSALEVGLVLSFISVTIMMIAVNYISGILLAISIGFYIYVYTMYLKRRTPQNIVIGGAAGALPPIIGWTSVTGSISIESLVLFLIIFMWTPPHFWALSLLNYHEYEKAKIPMLPVTHGIFTTKIHILVYSILLFPITLLPGLFLKDPVLYEITAIPLGLMFVVQAFQVFKSSISYHYRVMFTYSIIYLFILFTCIMLSSF.

9 helical membrane-spanning segments follow: residues 30–50 (LVVLTGVTGIIIAPGNIHPLI), 51–71 (AVISTLCIALGSGAAGAINMW), 93–115 (ISRSSALEVGLVLSFISVTIMMI), 119–136 (YISGILLAISIGFYIYVY), 148–168 (IVIGGAAGALPPIIGWTSVTG), 175–195 (LVLFLIIFMWTPPHFWALSLL), 219–239 (IHILVYSILLFPITLLPGLFL), 244–264 (LYEITAIPLGLMFVVQAFQVF), and 275–295 (MFTYSIIYLFILFTCIMLSSF).

Belongs to the UbiA prenyltransferase family. Protoheme IX farnesyltransferase subfamily.

The protein localises to the cell inner membrane. It catalyses the reaction heme b + (2E,6E)-farnesyl diphosphate + H2O = Fe(II)-heme o + diphosphate. Its pathway is porphyrin-containing compound metabolism; heme O biosynthesis; heme O from protoheme: step 1/1. Its function is as follows. Converts heme B (protoheme IX) to heme O by substitution of the vinyl group on carbon 2 of heme B porphyrin ring with a hydroxyethyl farnesyl side group. The sequence is that of Protoheme IX farnesyltransferase from Ehrlichia ruminantium (strain Gardel).